Consider the following 62-residue polypeptide: Flavodoxin (62 aa).

A Flavodoxin-like domain is found at 4–62; sequence IGIFFGTDTGKTRKIAKMIHKQLGELADAPVNINRTTLDDFMAYPVLLLGTPTLGDGQL.

The protein belongs to the flavodoxin family. Requires FMN as cofactor.

Low-potential electron donor to a number of redox enzymes. NifF is the electron donor to nitrogenase. In Klebsiella oxytoca, this protein is Flavodoxin (nifF).